The chain runs to 62 residues: Conotoxin Pn-B02 (62 aa).

Residues Met-1–Ser-19 form the signal peptide. A propeptide spanning residues Phe-20 to Ile-49 is cleaved from the precursor. Position 61 is an alanine amide (Ala-61).

This sequence belongs to the conotoxin T superfamily. In terms of processing, contains 2 disulfide bonds that can be either 'C1-C3, C2-C4' or 'C1-C4, C2-C3', since these disulfide connectivities have been observed for conotoxins with cysteine framework V (for examples, see AC P0DQQ7 and AC P81755). In terms of tissue distribution, expressed by the venom duct.

The protein localises to the secreted. This chain is Conotoxin Pn-B02, found in Conus pennaceus (Feathered cone).